The following is a 164-amino-acid chain: Lipoprotein signal peptidase (164 aa).

Helical transmembrane passes span 11–31 (YWVL…AVLS), 41–61 (VIPS…FSFL), 64–84 (QGGW…AYLV), and 92–112 (FATL…GNVI). Catalysis depends on residues Asp122 and Asp140. A helical membrane pass occupies residues 132 to 152 (FYPAFNIADSFICVGAVLAVL).

It belongs to the peptidase A8 family.

It is found in the cell inner membrane. It catalyses the reaction Release of signal peptides from bacterial membrane prolipoproteins. Hydrolyzes -Xaa-Yaa-Zaa-|-(S,diacylglyceryl)Cys-, in which Xaa is hydrophobic (preferably Leu), and Yaa (Ala or Ser) and Zaa (Gly or Ala) have small, neutral side chains.. It participates in protein modification; lipoprotein biosynthesis (signal peptide cleavage). Functionally, this protein specifically catalyzes the removal of signal peptides from prolipoproteins. This is Lipoprotein signal peptidase from Neisseria meningitidis serogroup C (strain 053442).